The chain runs to 226 residues: UPF0173 metal-dependent hydrolase Minf_0129 (226 aa).

Belongs to the UPF0173 family.

The protein is UPF0173 metal-dependent hydrolase Minf_0129 of Methylacidiphilum infernorum (isolate V4) (Methylokorus infernorum (strain V4)).